Here is a 340-residue protein sequence, read N- to C-terminus: Phosphoribosylformylglycinamidine cyclo-ligase (340 aa).

Belongs to the AIR synthase family.

The protein localises to the cytoplasm. It carries out the reaction 2-formamido-N(1)-(5-O-phospho-beta-D-ribosyl)acetamidine + ATP = 5-amino-1-(5-phospho-beta-D-ribosyl)imidazole + ADP + phosphate + H(+). The protein operates within purine metabolism; IMP biosynthesis via de novo pathway; 5-amino-1-(5-phospho-D-ribosyl)imidazole from N(2)-formyl-N(1)-(5-phospho-D-ribosyl)glycinamide: step 2/2. The polypeptide is Phosphoribosylformylglycinamidine cyclo-ligase (Streptococcus gordonii (strain Challis / ATCC 35105 / BCRC 15272 / CH1 / DL1 / V288)).